A 101-amino-acid chain; its full sequence is Small ribosomal subunit protein uS10 (101 aa).

This sequence belongs to the universal ribosomal protein uS10 family. Part of the 30S ribosomal subunit.

In terms of biological role, involved in the binding of tRNA to the ribosomes. The sequence is that of Small ribosomal subunit protein uS10 from Bacteroides fragilis (strain ATCC 25285 / DSM 2151 / CCUG 4856 / JCM 11019 / LMG 10263 / NCTC 9343 / Onslow / VPI 2553 / EN-2).